The sequence spans 36 residues: Beta-amanitin proprotein (36 aa).

Positions 1 to 10 (MSDINATRLP) are excised as a propeptide. The cyclopeptide (Ile-Pro) cross-link spans 11–18 (IWGIGCDP). A cross-link (2'-cysteinyl-6'-hydroxytryptophan sulfoxide (Trp-Cys)) is located at residues 12-16 (WGIGC). The propeptide occupies 19–36 (CIGDDVTALLTRGEASLC).

This sequence belongs to the MSDIN fungal toxin family. Post-translationally, processed by the macrocyclase-peptidase enzyme POPB to yield a toxic cyclic decapeptide. POPB first removes 10 residues from the N-terminus. Conformational trapping of the remaining peptide forces the enzyme to release this intermediate rather than proceed to macrocyclization. The enzyme rebinds the remaining peptide in a different conformation and catalyzes macrocyclization of the N-terminal 8 residues.

Toxin belonging to the bicyclic octapeptides amatoxins that acts by binding non-competitively to RNA polymerase II and greatly slowing the elongation of transcripts from target promoters. The sequence is that of Beta-amanitin proprotein from Amanita phalloides (Death cap).